A 346-amino-acid polypeptide reads, in one-letter code: MNWNEILFWLLKSGLFFFILITACAYYTLAERKVAGFIQDRKGPNRAGFWGLLQPLADGIKFLTKEEVFPVQVNKVMYLIAPAISMTCAIMAWSVVPLGGQIPLPSWLQEKTGLTFLDLQIANPDTGILFLFAISSLAVYGIIIAGWASNNKYSLLGAVRSTAQMISYELPLGMSVVSIVILSGSLRLTDISASQVGLWNIFKLPGFIAFCLFVVAMFAETNRLPFDLAEAESELVVGFHTEYGAFKFALFFIAEYMNMITMSCVVTLLFFGGYQVPFGILEGHVLQPLFGLVFFLGKVLFFTFLFLWVRWTLPRFRYDQLMSLGWKKLIPWAILNILIASIYIQF.

Helical transmembrane passes span 6 to 26 (ILFW…ACAY), 76 to 96 (VMYL…WSVV), 128 to 148 (ILFL…AGWA), 166 to 186 (ISYE…SGSL), 198 to 218 (LWNI…VAMF), 260 to 280 (ITMS…PFGI), 289 to 309 (LFGL…FLWV), and 324 to 344 (LGWK…SIYI).

It belongs to the complex I subunit 1 family. NDH-1 is composed of 14 different subunits. Subunits NuoA, H, J, K, L, M, N constitute the membrane sector of the complex.

Its subcellular location is the cell inner membrane. It carries out the reaction a quinone + NADH + 5 H(+)(in) = a quinol + NAD(+) + 4 H(+)(out). Its function is as follows. NDH-1 shuttles electrons from NADH, via FMN and iron-sulfur (Fe-S) centers, to quinones in the respiratory chain. The immediate electron acceptor for the enzyme in this species is believed to be ubiquinone. Couples the redox reaction to proton translocation (for every two electrons transferred, four hydrogen ions are translocated across the cytoplasmic membrane), and thus conserves the redox energy in a proton gradient. This subunit may bind ubiquinone. The chain is NADH-quinone oxidoreductase subunit H from Leptospira interrogans serogroup Icterohaemorrhagiae serovar copenhageni (strain Fiocruz L1-130).